The primary structure comprises 877 residues: DNA mismatch repair protein MutS (877 aa).

Residue 630–637 (GPNMAGKS) coordinates ATP.

This sequence belongs to the DNA mismatch repair MutS family.

This protein is involved in the repair of mismatches in DNA. It is possible that it carries out the mismatch recognition step. This protein has a weak ATPase activity. The chain is DNA mismatch repair protein MutS from Ruegeria pomeroyi (strain ATCC 700808 / DSM 15171 / DSS-3) (Silicibacter pomeroyi).